Reading from the N-terminus, the 141-residue chain is Aspartate 1-decarboxylase (141 aa).

S25 acts as the Schiff-base intermediate with substrate; via pyruvic acid in catalysis. Position 25 is a pyruvic acid (Ser) (S25). T57 serves as a coordination point for substrate. Y58 serves as the catalytic Proton donor. 73-75 lines the substrate pocket; the sequence is GAA. Residues 121–141 form a disordered region; the sequence is ASAPVPGSRTERSPQAVVAGG.

Belongs to the PanD family. Heterooctamer of four alpha and four beta subunits. It depends on pyruvate as a cofactor. In terms of processing, is synthesized initially as an inactive proenzyme, which is activated by self-cleavage at a specific serine bond to produce a beta-subunit with a hydroxyl group at its C-terminus and an alpha-subunit with a pyruvoyl group at its N-terminus.

The protein resides in the cytoplasm. The enzyme catalyses L-aspartate + H(+) = beta-alanine + CO2. Its pathway is cofactor biosynthesis; (R)-pantothenate biosynthesis; beta-alanine from L-aspartate: step 1/1. Its function is as follows. Catalyzes the pyruvoyl-dependent decarboxylation of aspartate to produce beta-alanine. This Streptomyces griseus subsp. griseus (strain JCM 4626 / CBS 651.72 / NBRC 13350 / KCC S-0626 / ISP 5235) protein is Aspartate 1-decarboxylase.